Reading from the N-terminus, the 8081-residue chain is Muscle M-line assembly protein unc-89 (8081 aa).

The interval 24 to 57 (DVNYSTHSSRSSYRSESLTSRTDGRGRSTSSEII) is disordered. A compositionally biased stretch (low complexity) spans 28–54 (STHSSRSSYRSESLTSRTDGRGRSTSS). The region spanning 63–127 (RSYPVYIAIQ…PGSYFETPTE (65 aa)) is the SH3 domain. Positions 152 to 330 (KRDQVYHELL…TTIPQRVHDL (179 aa)) constitute a DH domain. Residues 342–498 (DTGKLGRIIR…WSGSRKSSLF (157 aa)) form the PH domain. A compositionally biased stretch (polar residues) spans 479-495 (ASDQQSEFSEWSGSRKS). The segment at 479 to 531 (ASDQQSEFSEWSGSRKSSLFPGPEEGGPPRKKVKSPPVISPTGSSTSIYSGGS) is disordered. Low complexity predominate over residues 518 to 531 (SPTGSSTSIYSGGS). Ig-like C2-type domains follow at residues 547 to 633 (GTRV…ASTS), 648 to 736 (PAFV…AELF), 748 to 838 (PEFQ…LKVR), 946 to 1033 (PTFL…ARLV), 1044 to 1132 (PKFV…AKLT), and 1140 to 1227 (PEFD…NTLG). Cys-568 and Cys-621 are oxidised to a cystine. Low complexity-rich tracts occupy residues 1283-1303 (STKT…GVTV) and 1326-1335 (EGSISVSKIE). Positions 1283-1892 (STKTTTMSTT…PAPKLTRDLK (610 aa)) are disordered. Basic and acidic residues-rich tracts occupy residues 1336-1351 (VVSK…EGTP), 1361-1446 (ELPK…KEKS), 1453-1490 (KTGD…EKSP), 1515-1585 (MTHE…KSPE), 1592-1832 (KKSE…KEKS), and 1839-1857 (KTGD…EKPK). RCSD domains follow at residues 1375–1475 (KSPS…KSPE), 1479–1585 (DVKS…KSPE), 1597–1695 (EVKS…KSPQ), and 1700–1799 (KPAS…KSPE). Over residues 1858–1868 (SPTPKKSPPGS) the composition is skewed to pro residues. The span at 1875–1892 (KSPEAEKPPAPKLTRDLK) shows a compositional bias: basic and acidic residues. 41 consecutive Ig-like C2-type domains span residues 1982–2067 (PEFT…AQLT), 2071–2163 (PSTT…ADLK), 2171–2261 (PKFK…AKVT), 2269–2359 (PEFV…AQLK), 2367–2455 (PKFT…VQLA), 2463–2564 (PTFA…AKPA), 2563–2651 (PAFQ…GPLK), 2657–2746 (PVEF…ATLL), 2754–2858 (PDFL…SEAQ), 2887–2980 (PKFI…ATLT), 2994–3081 (PEFI…AFLT), 3087–3183 (PVFT…SKIT), 3189–3280 (PVFE…AEVT), 3286–3376 (PTFV…ANFA), 3384–3469 (PEFV…EALT), 3482–3572 (PEFT…ANMA), 3580–3667 (PLFV…ETVG), 3686–3777 (PLFI…LKIQ), 3817–3908 (PEFV…IIVT), 3920–4009 (PDFL…VTLT), 4018–4106 (PGFF…VPLT), 4109–4201 (PSET…ATVT), 4212–4297 (PSFK…AKVN), 4302–4387 (PEIV…AALT), 4400–4485 (PEIV…AALT), 4489–4580 (PGIA…CALT), 4588–4678 (PKII…GKIT), 4681–4771 (PKIT…AQLT), 4873–4961 (PEIV…AALT), 4965–5057 (PNVL…GSVV), 5067–5160 (PTSG…CKVT), 5171–5260 (PKFV…CEFQ), 5277–5366 (PRFN…ATYQ), 5383–5472 (PKIN…CSVN), 5487–5578 (PFFT…AHVQ), 5595–5685 (PKFI…SFVR), 5701–5790 (PRFT…GTAT), 5815–5904 (PKLM…CDVN), 5925–6014 (PGFT…AELV), 6038–6130 (PRIR…GSLN), and 6150–6239 (PGFV…AVLD). The cysteines at positions 2582 and 2635 are disulfide-linked. 2 disulfide bridges follow: Cys-2908–Cys-2964 and Cys-3015–Cys-3065. 2 disulfides stabilise this stretch: Cys-3707-Cys-3759 and Cys-3838-Cys-3890. Residues 4525–4553 (KNGKEITPSDKAQPGSDGDNKPQLVIPDA) are disordered. 4 cysteine pairs are disulfide-bonded: Cys-5298–Cys-5350, Cys-5404–Cys-5456, Cys-5508–Cys-5560, and Cys-5616–Cys-5669. Cystine bridges form between Cys-5836-Cys-5888 and Cys-5946-Cys-5998. Residues 6278–6374 (PDRGPFIKEV…SPPSRLMAPP (97 aa)) enclose the Fibronectin type-III 1 domain. Ig-like C2-type domains lie at 6413-6502 (PGVV…IMVD) and 6507-6596 (PNFI…CTVT). The Protein kinase 1 domain occupies 6592-6878 (SCTVTVEAEG…VDEALDHPWI (287 aa)). Disordered stretches follow at residues 6954 to 7130 (KKPP…QQKI), 7177 to 7217 (QVEA…PQPQ), 7284 to 7311 (PAIN…LSPR), 7324 to 7343 (RGKP…DDED), and 7348 to 7372 (DRKK…ERLE). Pro residues predominate over residues 6999-7009 (RQPPQIPPQPQ). The segment covering 7087-7110 (LEKRKLIPQDKGETPSHSKKEKTQ) has biased composition (basic and acidic residues). A compositionally biased stretch (pro residues) spans 7200–7215 (KPTPSPTSPQKSPVPQ). Over residues 7284–7302 (PAINLSPNPKSPRRSTPGT) the composition is skewed to polar residues. Residues 7528-7617 (PIFTARLRDV…TDKSSCRLIS (90 aa)) form the Ig-like C2-type 50 domain. A disulfide bridge links Cys-7549 with Cys-7600. In terms of domain architecture, Fibronectin type-III 2 spans 7623–7721 (RPGRPEAELS…SSRIVQTHGK (99 aa)). A disordered region spans residues 7746-7773 (STNQLGGISEESEEDSEARTANEDMKSN). A compositionally biased stretch (basic and acidic residues) spans 7762–7771 (EARTANEDMK). The 251-residue stretch at 7785–8035 (FQIGGLKFKG…TDEALSHKFL (251 aa)) folds into the Protein kinase 2 domain.

Belongs to the protein kinase superfamily. CAMK Ser/Thr protein kinase family. In terms of assembly, may interact (via fibronectin type-III domain 1, Ig-like C2-type domain 48/49 and protein kinase domain 1 or C-terminus of the interkinase region) with lim-9 (via LIM zinc-binding domain). May interact (via fibronectin type-III domain 1, Ig-like C2-type domain 48/49 and kinase protein domain 1 or Ig-like C2-type domain 50, fibronectin type-III domain 2 and kinase protein domain 2) with scpl-1 isoforms a and b (via FCP1 homology domain); the interaction may act as a molecular bridge to bring two unc-89 molecules together or to stabilize a loop between the 2 kinase domains. May interact (via SH3 domain) with unc-15. May interact (via Ig-like C2-type domain 1-3) with cpna-1 (via VWFA domain). May interact (via Ig-like C2-type domain 2/3 and, Ig-like C2-type domain 50 and fibronectin type-III domain 2) with mel-26 (via MATH domain). May interact (via DH and PH domains) with rho-1, ced-10, mig-2 and cdc-42. In terms of tissue distribution, expressed in body-wall, pharyngeal muscles and a few muscle cells of the tail (at protein level). Expressed in gonadal myoepithelial sheath cells (at protein level). Isoform c: Expressed in body wall and vulval muscles but not in pharyngeal muscles. Isoform d: Specifically expressed in vulval, intestinal, anal depressor and anal sphincter muscles.

The protein resides in the cytoplasm. It localises to the myofibril. It is found in the sarcomere. The protein localises to the m line. In terms of biological role, structural component of the muscle M line which is involved in assembly and organization of sarcomere myofilaments. The large isoform a, isoform b, isoform d and isoform f play an essential role in maintaining the organization of sarcomeres but not myofilament alignment during body wall muscle development whereas the small isoform c and isoform d appear to have a minor role. Isoform b and isoform f are required for the organization of unc-15/paramyosin into sarcomere thick filaments in body wall muscles. By binding mel-26, a substrate adapter of the cul-3 E3 ubiquitin-protein ligase complex, regulates the organization of myosin thick filaments, likely by preventing the degradation of microtubule severing protein mei-1. Acts as a guanine nucleotide exchange factor (GEF) for Rho GTPase rho-1 but not ced-10, mig-2 and cdc-42. The large isoforms regulate Ca(2+) signaling during muscle contraction by ensuring the correct localization of sarco-endoplamic reticulum Ca(2+) ATPase sca-1 and ryanodine receptor unc-68. By controlling the contraction and/or organization of pharyngeal muscles, plays a role in the formation of pharyngeal gland cell extension. This is Muscle M-line assembly protein unc-89 (unc-89) from Caenorhabditis elegans.